The primary structure comprises 415 residues: SNF1 protein kinase subunit beta-2 (415 aa).

Disordered stretches follow at residues 1 to 43 (MGTT…EMDA), 55 to 158 (KCSD…PSEI), and 249 to 276 (EKNPTNEKIRSKEADSMRPPTSDRSSIA). The N-myristoyl glycine moiety is linked to residue Gly-2. Residues 9–19 (AQKKQTTKKCR) are compositionally biased toward basic residues. Residues 55–69 (KCSDSQDAGQPSREG) are compositionally biased toward polar residues. Residue Ser-66 is modified to Phosphoserine. Basic and acidic residues-rich tracts occupy residues 122-150 (PKQDASPDDDRSGHSSPREEGQQQIRAKE) and 249-264 (EKNPTNEKIRSKEADS). Positions 154–335 (GPSEIKSSLM…LDRQQSNTDT (182 aa)) are kinase-interacting sequence (KIS); required for interaction with SNF1. Residue Ser-298 is modified to Phosphoserine. The association with SNF1 kinase complex (ASC) domain; required for interaction with SNF4 stretch occupies residues 336-415 (SWLTPPQLPP…QILYTPIESS (80 aa)).

Belongs to the 5'-AMP-activated protein kinase beta subunit family. Component of the SNF1 kinase complex, a heterotrimeric complex composed of the catalytic alpha subunit SNF1, one of the three related beta subunits SIP1, SIP2 or GAL83, and the regulatory gamma subunit SNF4. The beta subunit serves as a bridge between the catalytic and the regulatory subunit. Interacts (via KIS domain) with SNF1. Interacts (via ASC domain) with SNF4. Phosphorylated by SNF1 in vitro.

It localises to the cytoplasm. The protein localises to the cell membrane. Functionally, beta subunit of the SNF1 kinase complex, which is required for transcriptional, metabolic, and developmental adaptations in response to glucose limitation. Has a structural role, mediating heterotrimer formation, and a regulatory role, defining carbon source-regulated subcellular location and substrate specificity of the SNF1 kinase complex. Involved in the regulation of aging. Acts as a negative regulator of nuclear SNF1 activity in young cells by sequestering its activating gamma subunit at the plasma membrane. This chain is SNF1 protein kinase subunit beta-2 (SIP2), found in Saccharomyces cerevisiae (strain ATCC 204508 / S288c) (Baker's yeast).